Here is a 468-residue protein sequence, read N- to C-terminus: Glutamate--tRNA ligase 2 (468 aa).

The 'HIGH' region signature appears at 13-23 (PSPTGYLHIGG). The 'KMSKS' region motif lies at 241–245 (KLSKR). Lysine 244 is a binding site for ATP.

This sequence belongs to the class-I aminoacyl-tRNA synthetase family. Glutamate--tRNA ligase type 1 subfamily. In terms of assembly, monomer.

The protein resides in the cytoplasm. It catalyses the reaction tRNA(Glu) + L-glutamate + ATP = L-glutamyl-tRNA(Glu) + AMP + diphosphate. In terms of biological role, catalyzes the attachment of glutamate to tRNA(Glu) in a two-step reaction: glutamate is first activated by ATP to form Glu-AMP and then transferred to the acceptor end of tRNA(Glu). In Paracoccus denitrificans (strain Pd 1222), this protein is Glutamate--tRNA ligase 2.